The primary structure comprises 451 residues: Heme sensor protein HssS (451 aa).

Helical transmembrane passes span 9–29 (IAIY…LFTN) and 164–184 (IFLA…VIAS). Residues 186–238 (YSIIKPVTALKNATTRIMKGDFSTPIKQTRHDEIGTLQSRFNTMRQNLGQVDQ) enclose the HAMP domain. A Histidine kinase domain is found at 246–451 (NVSHEVKTPL…KTQFIVKLFI (206 aa)). At H249 the chain carries Phosphohistidine; by autocatalysis.

Post-translationally, autophosphorylated.

The protein localises to the cell membrane. The enzyme catalyses ATP + protein L-histidine = ADP + protein N-phospho-L-histidine.. Its function is as follows. Member of the two-component regulatory system HssS/HssR involved in intracellular heme homeostasis and tempering of staphylococcal virulence. HssS functions as a heme sensor histidine kinase which is autophosphorylated at a histidine residue and transfers its phosphate group to an aspartate residue of HssR. HssR/HssS activates the expression of HrtAB, an efflux pump, in response to extracellular heme, hemin, hemoglobin or blood. This is Heme sensor protein HssS (hssS) from Staphylococcus epidermidis (strain ATCC 35984 / DSM 28319 / BCRC 17069 / CCUG 31568 / BM 3577 / RP62A).